Reading from the N-terminus, the 399-residue chain is Guanine nucleotide-binding protein G(f) subunit alpha (399 aa).

Residues 46–399 enclose the G-alpha domain; it reads TTVKILLLGT…SENVSSMGLF (354 aa). The interval 49 to 62 is G1 motif; the sequence is KILLLGTAESGKTT. GTP is bound by residues 54–61, 188–194, 221–225, 290–293, and Ala-371; these read GTAESGKT, LHSRKIT, DVGGQ, and NKYD. The G2 motif stretch occupies residues 186 to 194; it reads DILHSRKIT. Thr-194 lines the Mg(2+) pocket. The interval 217-226 is G3 motif; the sequence is FQMYDVGGQR. Residues 286–293 are G4 motif; the sequence is IVFLNKYD. The tract at residues 369 to 374 is G5 motif; the sequence is TVATDT.

Belongs to the G-alpha family. In terms of assembly, g proteins are composed of 3 units; alpha, beta and gamma. The alpha chain contains the guanine nucleotide binding site. In terms of tissue distribution, during embryogenesis, expressed primarily in the developing gut and transiently in the amnioserosa.

Its function is as follows. Guanine nucleotide-binding proteins (G proteins) are involved as modulators or transducers in various transmembrane signaling systems. This is Guanine nucleotide-binding protein G(f) subunit alpha (Galphaf) from Drosophila melanogaster (Fruit fly).